A 358-amino-acid chain; its full sequence is Arginase (358 aa).

Mn(2+)-binding residues include His-146, Asp-174, His-176, and Asp-178. Residues 176–180 (HADIN), 187–189 (SGN), and Asp-233 contribute to the substrate site. Mn(2+) is bound by residues Asp-280 and Asp-282. Substrate-binding residues include Thr-294 and Glu-325.

This sequence belongs to the arginase family. As to quaternary structure, homohexamer. Mn(2+) serves as cofactor.

It localises to the cytoplasm. The enzyme catalyses L-arginine + H2O = urea + L-ornithine. It participates in nitrogen metabolism; urea cycle; L-ornithine and urea from L-arginine: step 1/1. The chain is Arginase (aga-1) from Neurospora crassa (strain ATCC 24698 / 74-OR23-1A / CBS 708.71 / DSM 1257 / FGSC 987).